A 305-amino-acid polypeptide reads, in one-letter code: Ribosomal RNA small subunit methyltransferase H (305 aa).

S-adenosyl-L-methionine-binding positions include 47 to 49 (GGH), Asp-66, Phe-93, Asp-108, and Gln-115. Positions 280–305 (ASAEEQERNPRSRSAKLRIARKRSES) are disordered. Residues 290–305 (RSRSAKLRIARKRSES) are compositionally biased toward basic residues.

The protein belongs to the methyltransferase superfamily. RsmH family.

Its subcellular location is the cytoplasm. It catalyses the reaction cytidine(1402) in 16S rRNA + S-adenosyl-L-methionine = N(4)-methylcytidine(1402) in 16S rRNA + S-adenosyl-L-homocysteine + H(+). Functionally, specifically methylates the N4 position of cytidine in position 1402 (C1402) of 16S rRNA. This chain is Ribosomal RNA small subunit methyltransferase H, found in Synechococcus sp. (strain WH7803).